The chain runs to 85 residues: Depressant scorpion toxin BmKIM (85 aa).

The N-terminal stretch at 1-21 (MKLFLLLVFFASMLIDGLVNA) is a signal peptide. An LCN-type CS-alpha/beta domain is found at 22-82 (DGYIRGSNGC…TWKSESNTCG (61 aa)). 4 disulfides stabilise this stretch: Cys-31–Cys-81, Cys-35–Cys-56, Cys-42–Cys-63, and Cys-46–Cys-65. Gly-82 carries the glycine amide modification.

Belongs to the long (4 C-C) scorpion toxin superfamily. Sodium channel inhibitor family. In terms of tissue distribution, expressed by the venom gland.

Its subcellular location is the secreted. Functionally, causes a slow progressive depressant flaccid paralysis, when injected into S.falculata blowfly larvae. Inhibits dose-dependently the total sodium (Nav) currents both in dorsal root ganglia neurons and in ventricular myocytes. Is toxic to mice by intravenous injection, but not by subcutaneous or intracerebroventricular injection. Produces antiarrhythmia in rat. Is then active on both mammals and insects. The polypeptide is Depressant scorpion toxin BmKIM (KIM2) (Olivierus martensii (Manchurian scorpion)).